The primary structure comprises 486 residues: Kynurenine 3-monooxygenase (486 aa).

2 helical membrane-spanning segments follow: residues L401–Y424 and I437–R459.

The protein belongs to the aromatic-ring hydroxylase family. KMO subfamily. The cofactor is FAD.

The protein localises to the mitochondrion. Its subcellular location is the membrane. The catalysed reaction is L-kynurenine + NADPH + O2 + H(+) = 3-hydroxy-L-kynurenine + NADP(+) + H2O. Its pathway is cofactor biosynthesis; NAD(+) biosynthesis; quinolinate from L-kynurenine: step 1/3. Functionally, catalyzes the hydroxylation of L-kynurenine (L-Kyn) to form 3-hydroxy-L-kynurenine (L-3OHKyn). Required for synthesis of quinolinic acid. In Anopheles gambiae (African malaria mosquito), this protein is Kynurenine 3-monooxygenase (kh).